The sequence spans 508 residues: MGLPWYRVHTVVLNDPGRLLSVHIMHTALVAGWAGSMALYELAVFDPSDPVLDPMWRQGMFVIPFMTRLGITNSWGGWGIAGGTVTNPGLWSYEGVAGAHIAFSGLCFLAAIWHWVYWDLEVFYDERTGKPSLDLPKIFGIHLFLSGVACFGFGAFHVTGLYGPGIWVSDPYGLTGKVQPIKPTWGAEGFDPFVPGGIASHHIAAGTLGILAGLFHLSVRPPQRLYKGLRMGNIETVLSSSIAAVFFAAFVVAGTMWYGSATTPIELFGPTRYQWDQGYFQQEIYRRVSAGLAENQSLSETWSKIPEKLAFYDYIGNNPAKGGLFRAGSMDNGDGIAVGWLGHPIFRDNEGRELFVRRMPTFFETFPIILVDGDGIVRADVPFRRAESKYSVEQVGVTVAFYGGELNGVSYSDPATVKKYARRAQLGEIFELDRATLKSDGVFRSSPRGWFTFGHASFALLFFFGHIWHGARTLFRDVFAGIDPDLDAQVEFGAFQKLGDPTTRRQGA.

6 consecutive transmembrane segments (helical) span residues 21–36 (SVHI…WAGS), 101–115 (IAFS…IWHW), 140–156 (GIHL…FGAF), 203–218 (IAAG…FHLS), 237–252 (VLSS…AFVV), and 457–472 (SFAL…HGAR).

Belongs to the PsbB/PsbC family. PsbB subfamily. As to quaternary structure, PSII is composed of 1 copy each of membrane proteins PsbA, PsbB, PsbC, PsbD, PsbE, PsbF, PsbH, PsbI, PsbJ, PsbK, PsbL, PsbM, PsbT, PsbX, PsbY, PsbZ, Psb30/Ycf12, at least 3 peripheral proteins of the oxygen-evolving complex and a large number of cofactors. It forms dimeric complexes. The cofactor is Binds multiple chlorophylls. PSII binds additional chlorophylls, carotenoids and specific lipids..

The protein resides in the plastid membrane. One of the components of the core complex of photosystem II (PSII). It binds chlorophyll and helps catalyze the primary light-induced photochemical processes of PSII. PSII is a light-driven water:plastoquinone oxidoreductase, using light energy to abstract electrons from H(2)O, generating O(2) and a proton gradient subsequently used for ATP formation. The polypeptide is Photosystem II CP47 reaction center protein (Cuscuta reflexa (Southern Asian dodder)).